A 283-amino-acid chain; its full sequence is Non-selective voltage-gated ion channel VDAC3 (283 aa).

Cys-2 is modified (N-acetylcysteine). Thr-4 bears the Phosphothreonine mark. Lys-12, Lys-15, and Lys-20 each carry N6-acetyllysine. A run of 2 beta stranded transmembrane segments spans residues 26-35 and 39-47; these read MVKIDLRTKS and VEFSTSGHA. A Glycyl lysine isopeptide (Lys-Gly) (interchain with G-Cter in ubiquitin) cross-link involves residue Lys-53. 3 consecutive transmembrane segments (beta stranded) span residues 54–64, 69–76, and 80–89; these read ASGNLETKYKV, LTFTQKWN, and TLGTEISLEN. At Lys-90 the chain carries N6-acetyllysine. A beta stranded transmembrane segment spans residues 95–104; it reads LKLTLDTIFV. Residues Lys-109 and Lys-110 each participate in a glycyl lysine isopeptide (Lys-Gly) (interchain with G-Cter in ubiquitin) cross-link. Beta stranded transmembrane passes span 111-120, 123-130, 137-145, 150-158, 163-175, 178-185, 189-198, 202-211, 218-227, and 231-238; these read SGKLKASYKR, FSLGSNVD, TIYGWAVLA, LAGYQMSFD, KLSQ…GYKA, FQLHTHVN, EFGGSIYQKV, IETSINLAWT, RFGIAAKYKL, and TSLSAKVN. Phosphoserine is present on Ser-241. NAD(+) is bound by residues 242–244 and 260–264; these read LIG and SALID. Transmembrane regions (beta stranded) follow at residues 242–251 and 254–263; these read LIGLGYTQTL and GVKLTLSALI. Lys-266 is modified (N6-acetyllysine; alternate). A Glycyl lysine isopeptide (Lys-Gly) (interchain with G-Cter in ubiquitin); alternate cross-link involves residue Lys-266. A beta stranded membrane pass occupies residues 273 to 282; that stretch reads HKVGLGFELE.

Belongs to the eukaryotic mitochondrial porin family. In terms of assembly, interacts with ARMC12 in a TBC1D21-dependent manner. Interacts with MISFA. In terms of processing, ubiquitinated by PRKN during mitophagy, leading to its degradation and enhancement of mitophagy. Deubiquitinated by USP30.

It is found in the mitochondrion outer membrane. The protein resides in the membrane. It carries out the reaction chloride(in) = chloride(out). It catalyses the reaction K(+)(in) = K(+)(out). In terms of biological role, non-selective voltage-gated ion channel that mediates the transport of anions and cations through the mitochondrion outer membrane and plasma membrane. Forms a high-conducting channel with a stable open state and a voltage-induced closure with a mild preference for anions over cations. Involved in male fertility and sperm mitochondrial sheath formation. The polypeptide is Non-selective voltage-gated ion channel VDAC3 (Oryctolagus cuniculus (Rabbit)).